Reading from the N-terminus, the 274-residue chain is MQQLQNVIESAFERRADITPANVDTVTREAVNQVIALLDSGALRVAEKIDGQWVTHQWLKKAVLLSFRINDNQVIDGAESRYFDKVPMKFADYDEARFQKEGFRVVPPAAVRQGAFIARNTVLMPSYVNIGAYVDEGTMVDTWATVGSCAQIGKNVHLSGGVGIGGVLEPLQANPTIIEDNCFIGARSEVVEGVIVEEGSVISMGVYLGQSTKIYDRETGEVFYGRVPAGSVVVSGNLPSKDGKYSLYCAVIVKKVDAKTRGKVGINELLRTID.

Belongs to the transferase hexapeptide repeat family.

The protein resides in the cytoplasm. It catalyses the reaction (S)-2,3,4,5-tetrahydrodipicolinate + succinyl-CoA + H2O = (S)-2-succinylamino-6-oxoheptanedioate + CoA. It functions in the pathway amino-acid biosynthesis; L-lysine biosynthesis via DAP pathway; LL-2,6-diaminopimelate from (S)-tetrahydrodipicolinate (succinylase route): step 1/3. The protein is 2,3,4,5-tetrahydropyridine-2,6-dicarboxylate N-succinyltransferase of Klebsiella pneumoniae (strain 342).